A 365-amino-acid chain; its full sequence is tRNA-specific 2-thiouridylase MnmA (365 aa).

Residues Ala14–Ser21 and Leu40 contribute to the ATP site. Cys108 acts as the Nucleophile in catalysis. The cysteines at positions 108 and 204 are disulfide-linked. Gly132 is an ATP binding site. The interval Lys154–Gln156 is interaction with tRNA. Residue Cys204 is the Cysteine persulfide intermediate of the active site.

This sequence belongs to the MnmA/TRMU family.

The protein resides in the cytoplasm. It catalyses the reaction S-sulfanyl-L-cysteinyl-[protein] + uridine(34) in tRNA + AH2 + ATP = 2-thiouridine(34) in tRNA + L-cysteinyl-[protein] + A + AMP + diphosphate + H(+). Functionally, catalyzes the 2-thiolation of uridine at the wobble position (U34) of tRNA, leading to the formation of s(2)U34. This chain is tRNA-specific 2-thiouridylase MnmA, found in Rickettsia akari (strain Hartford).